The sequence spans 329 residues: Phosphatidylcholine:ceramide cholinephosphotransferase 3 (329 aa).

Over Met1–Gln26 the chain is Cytoplasmic. The helical transmembrane segment at Val27–Ile47 threads the bilayer. Topologically, residues Thr48–Gly74 are extracellular. A helical transmembrane segment spans residues Met75–Phe95. The Cytoplasmic segment spans residues Lys96 to Arg147. Residues Phe148–Leu168 traverse the membrane as a helical segment. Residues Pro169–Thr211 are Extracellular-facing. Residues Val212–Phe232 traverse the membrane as a helical segment. Position 233 (Arg233) is a topological domain, cytoplasmic. The helical transmembrane segment at Pro234–Tyr254 threads the bilayer. The Extracellular segment spans residues Thr255–Asp257. The helical transmembrane segment at Val258–Gly278 threads the bilayer. Over Ala279–His329 the chain is Cytoplasmic.

This sequence belongs to the sphingomyelin synthase family.

It localises to the membrane. It catalyses the reaction an N-acylsphing-4-enine + a 1,2-diacyl-sn-glycero-3-phosphocholine = a sphingomyelin + a 1,2-diacyl-sn-glycerol. It carries out the reaction an N-acylsphinganine + a 1,2-diacyl-sn-glycero-3-phosphocholine = an N-acylsphinganine-1-phosphocholine + a 1,2-diacyl-sn-glycerol. The catalysed reaction is an N-acylsphing-4-enine + a 1,2-diacyl-sn-glycero-3-phosphoethanolamine = an N-acylsphing-4-enine 1-phosphoethanolamine + a 1,2-diacyl-sn-glycerol. The enzyme catalyses an N-acylsphinganine + a 1,2-diacyl-sn-glycero-3-phosphoethanolamine = an N-acylsphinganine-1-phosphoethanolamine + a 1,2-diacyl-sn-glycerol. Its function is as follows. Bifunctional sphingomyelin (SM)/ethanolamine phosphorylceramide (EPC) synthase with minimal inositol phosphorylceramide (IPC) synthase activity. Specificity is likely to be defined by residues in the lumenal catalytic domain that interact with the polar head groups of the phospholipid donors. SM is synthesized by both stages of the parasite life cycle, bloodstream forms (BSF) and procyclic forms (PCF), by transferring the phosphocholine from a 1,2-diacyl-sn-glycero-3-phosphocholine to an N-acylsphing-4-enine (ceramide) or an N-acylsphinganine (dihydroceramide). Similarly, EPC is synthesized by transferring phosphoethanolamine from a 1,2-diacyl-sn-glycero-3-phosphoethanolamine to ceramide or dihydroceramide by BSF and PCF, while IPC is confined to PCF. The ceramide/dihydroceramide ratios are skewed towards dihydroceramide in PCF parasites and ceramide in BSF parasites, this is likely due to differential expression and/or regulation of dihydroceramide desaturase, the enzyme responsible for converting dihydroceramide to ceramide. This Trypanosoma brucei brucei protein is Phosphatidylcholine:ceramide cholinephosphotransferase 3.